We begin with the raw amino-acid sequence, 324 residues long: Probable 6-phosphogluconolactonase 4, chloroplastic (324 aa).

A chloroplast-targeting transit peptide spans 1 to 61 (MSVSAAVAAA…RAPAMATDCA (61 aa)). A disordered region spans residues 20–43 (RRRSPPASRVAATSRGRPFSSGPH). The segment covering 24-34 (PPASRVAATSR) has biased composition (low complexity).

This sequence belongs to the glucosamine/galactosamine-6-phosphate isomerase family. 6-phosphogluconolactonase subfamily.

Its subcellular location is the plastid. The protein resides in the chloroplast. It carries out the reaction 6-phospho-D-glucono-1,5-lactone + H2O = 6-phospho-D-gluconate + H(+). The protein operates within carbohydrate degradation; pentose phosphate pathway; D-ribulose 5-phosphate from D-glucose 6-phosphate (oxidative stage): step 2/3. Functionally, hydrolysis of 6-phosphogluconolactone to 6-phosphogluconate. The chain is Probable 6-phosphogluconolactonase 4, chloroplastic from Oryza sativa subsp. indica (Rice).